A 160-amino-acid polypeptide reads, in one-letter code: MGVFTYETEFTSVIPPPRLFKAFILDADNLIPKIAPQAVKCAEIIEGDGGVGTIKKITFGEGSQFGSVTHKIDGIDKENFVYSYSLIEGDALSDKIEKISYETKLVSSSDGGSIIKSTSNYHTKGDVEIKEEHVKAGKEKASHLFKLVEGYLLANPNEYC.

This sequence belongs to the BetVI family. In terms of assembly, monomer. Interacts with AP. As to expression, highly expressed in ripe red fruits. Expressed in roots and white fruits. Expressed at low levels in open flowers.

Functionally, involved in the control of flavonoid biosynthesis in fruits, probably by binding directly to natural flavonoids. Binds the natural flavonoid myricetin with affinities in the low micromolar range. In Fragaria ananassa (Strawberry), this protein is Major strawberry allergen Fra a 1-2.